The sequence spans 142 residues: Large ribosomal subunit protein uL11 (142 aa).

It belongs to the universal ribosomal protein uL11 family. Part of the ribosomal stalk of the 50S ribosomal subunit. Interacts with L10 and the large rRNA to form the base of the stalk. L10 forms an elongated spine to which L12 dimers bind in a sequential fashion forming a multimeric L10(L12)X complex. One or more lysine residues are methylated.

Functionally, forms part of the ribosomal stalk which helps the ribosome interact with GTP-bound translation factors. The polypeptide is Large ribosomal subunit protein uL11 (Shewanella frigidimarina (strain NCIMB 400)).